Here is a 369-residue protein sequence, read N- to C-terminus: tRNA 2-selenouridine synthase (369 aa).

The Rhodanese domain maps to 15–138; that stretch reads FLNQHPMMDV…MRQYLIGVIE (124 aa). Cysteine 98 serves as the catalytic S-selanylcysteine intermediate.

It belongs to the SelU family. In terms of assembly, monomer.

The catalysed reaction is 5-methylaminomethyl-2-thiouridine(34) in tRNA + selenophosphate + (2E)-geranyl diphosphate + H2O + H(+) = 5-methylaminomethyl-2-selenouridine(34) in tRNA + (2E)-thiogeraniol + phosphate + diphosphate. It catalyses the reaction 5-methylaminomethyl-2-thiouridine(34) in tRNA + (2E)-geranyl diphosphate = 5-methylaminomethyl-S-(2E)-geranyl-thiouridine(34) in tRNA + diphosphate. It carries out the reaction 5-methylaminomethyl-S-(2E)-geranyl-thiouridine(34) in tRNA + selenophosphate + H(+) = 5-methylaminomethyl-2-(Se-phospho)selenouridine(34) in tRNA + (2E)-thiogeraniol. The enzyme catalyses 5-methylaminomethyl-2-(Se-phospho)selenouridine(34) in tRNA + H2O = 5-methylaminomethyl-2-selenouridine(34) in tRNA + phosphate. Its function is as follows. Involved in the post-transcriptional modification of the uridine at the wobble position (U34) of tRNA(Lys), tRNA(Glu) and tRNA(Gln). Catalyzes the conversion of 2-thiouridine (S2U-RNA) to 2-selenouridine (Se2U-RNA). Acts in a two-step process involving geranylation of 2-thiouridine (S2U) to S-geranyl-2-thiouridine (geS2U) and subsequent selenation of the latter derivative to 2-selenouridine (Se2U) in the tRNA chain. The polypeptide is tRNA 2-selenouridine synthase (Shewanella sp. (strain W3-18-1)).